We begin with the raw amino-acid sequence, 351 residues long: S-adenosylmethionine:tRNA ribosyltransferase-isomerase (351 aa).

Belongs to the QueA family. Monomer.

Its subcellular location is the cytoplasm. It catalyses the reaction 7-aminomethyl-7-carbaguanosine(34) in tRNA + S-adenosyl-L-methionine = epoxyqueuosine(34) in tRNA + adenine + L-methionine + 2 H(+). The protein operates within tRNA modification; tRNA-queuosine biosynthesis. Transfers and isomerizes the ribose moiety from AdoMet to the 7-aminomethyl group of 7-deazaguanine (preQ1-tRNA) to give epoxyqueuosine (oQ-tRNA). The protein is S-adenosylmethionine:tRNA ribosyltransferase-isomerase of Hyphomonas neptunium (strain ATCC 15444).